The chain runs to 249 residues: Elongator complex protein 6 homolog (249 aa).

It belongs to the ELP6 family. In terms of assembly, component of the elongator complex.

The protein localises to the cytoplasm. The protein resides in the nucleus. The protein operates within tRNA modification; 5-methoxycarbonylmethyl-2-thiouridine-tRNA biosynthesis. Its function is as follows. Component of the elongator complex which is required for multiple tRNA modifications, including mcm5U (5-methoxycarbonylmethyl uridine), mcm5s2U (5-methoxycarbonylmethyl-2-thiouridine), and ncm5U (5-carbamoylmethyl uridine). The elongator complex catalyzes formation of carboxymethyluridine in the wobble base at position 34 in tRNAs. This chain is Elongator complex protein 6 homolog, found in Schizosaccharomyces pombe (strain 972 / ATCC 24843) (Fission yeast).